A 332-amino-acid chain; its full sequence is NADH-quinone oxidoreductase subunit H (332 aa).

Helical transmembrane passes span 4-24 (FAFFALEALIKCIIIIAIFAS), 44-64 (IGPDMVGPFGLIQLVADMIKL), 78-98 (FIFAIAPLISAICAFVSLAAI), 120-140 (VALLFVIGTSGLCFYAVFLGG), 165-185 (VGALALIAIVMLVGSFSLVDI), 194-214 (FSWLIFKQPLAFVLFIIALFI), 255-275 (IAGAILVTLLFLGGFNSFWII), 279-299 (IMMIVKSSFIFFWYFWARAAF), and 312-332 (YLILIPLAVLNLLITALAVLL).

It belongs to the complex I subunit 1 family. As to quaternary structure, NDH-1 is composed of 14 different subunits. Subunits NuoA, H, J, K, L, M, N constitute the membrane sector of the complex.

It is found in the cell inner membrane. It catalyses the reaction a quinone + NADH + 5 H(+)(in) = a quinol + NAD(+) + 4 H(+)(out). NDH-1 shuttles electrons from NADH, via FMN and iron-sulfur (Fe-S) centers, to quinones in the respiratory chain. The immediate electron acceptor for the enzyme in this species is believed to be ubiquinone. Couples the redox reaction to proton translocation (for every two electrons transferred, four hydrogen ions are translocated across the cytoplasmic membrane), and thus conserves the redox energy in a proton gradient. This subunit may bind ubiquinone. This Campylobacter jejuni subsp. jejuni serotype O:6 (strain 81116 / NCTC 11828) protein is NADH-quinone oxidoreductase subunit H.